We begin with the raw amino-acid sequence, 329 residues long: Lipoyl synthase (329 aa).

Positions 55, 60, 66, 81, 85, 88, and 292 each coordinate [4Fe-4S] cluster. The 215-residue stretch at 67 to 281 (WEDREATFLI…RDEAEAIGFL (215 aa)) folds into the Radical SAM core domain.

This sequence belongs to the radical SAM superfamily. Lipoyl synthase family. [4Fe-4S] cluster is required as a cofactor.

It is found in the cytoplasm. It carries out the reaction [[Fe-S] cluster scaffold protein carrying a second [4Fe-4S](2+) cluster] + N(6)-octanoyl-L-lysyl-[protein] + 2 oxidized [2Fe-2S]-[ferredoxin] + 2 S-adenosyl-L-methionine + 4 H(+) = [[Fe-S] cluster scaffold protein] + N(6)-[(R)-dihydrolipoyl]-L-lysyl-[protein] + 4 Fe(3+) + 2 hydrogen sulfide + 2 5'-deoxyadenosine + 2 L-methionine + 2 reduced [2Fe-2S]-[ferredoxin]. It participates in protein modification; protein lipoylation via endogenous pathway; protein N(6)-(lipoyl)lysine from octanoyl-[acyl-carrier-protein]: step 2/2. Functionally, catalyzes the radical-mediated insertion of two sulfur atoms into the C-6 and C-8 positions of the octanoyl moiety bound to the lipoyl domains of lipoate-dependent enzymes, thereby converting the octanoylated domains into lipoylated derivatives. This is Lipoyl synthase from Leifsonia xyli subsp. xyli (strain CTCB07).